We begin with the raw amino-acid sequence, 317 residues long: uncharacterized protein (317 aa).

The HTH lysR-type domain maps to 29–86 (IDLNLLTIFEAVYVHKGIVNAAKVLNLTPSAISQSIQKLRVIFPDPLFIRKGQGVTPT). Residues 46–65 (IVNAAKVLNLTPSAISQSIQ) constitute a DNA-binding region (H-T-H motif).

This sequence belongs to the LysR transcriptional regulatory family.

This is an uncharacterized protein from Escherichia coli (strain K12).